Reading from the N-terminus, the 249-residue chain is MTSQNPTQEPENNDHLIISQDSQHPANLIPELCAKFWHLGWVTGTGGGASIRKDDLVYLAPSGVQKELMKPEHIYVLDITKQLDPKQRIYLRSPPNLKPSQCTPLFMAAFTKRNAGCCIHTHSKWAVLITLLLESAPNTTMFEINNIEQIKAFGKGYTKSGNLGYHDTLRIPVIENTPHEEDLTEYLEEAMEKYPDTYAVLVRRHGVYVWGESVHKAKTQCESLDYLFQIAVDMKKLGLPWLSDVKPIA.

Cysteine 102 serves as a coordination point for substrate. 2 residues coordinate Zn(2+): histidine 120 and histidine 122. Residue glutamate 148 is the Proton donor/acceptor of the active site. A Zn(2+)-binding site is contributed by histidine 205.

The protein belongs to the aldolase class II family. MtnB subfamily. It depends on Zn(2+) as a cofactor.

It localises to the cytoplasm. The enzyme catalyses 5-(methylsulfanyl)-D-ribulose 1-phosphate = 5-methylsulfanyl-2,3-dioxopentyl phosphate + H2O. It participates in amino-acid biosynthesis; L-methionine biosynthesis via salvage pathway; L-methionine from S-methyl-5-thio-alpha-D-ribose 1-phosphate: step 2/6. Catalyzes the dehydration of methylthioribulose-1-phosphate (MTRu-1-P) into 2,3-diketo-5-methylthiopentyl-1-phosphate (DK-MTP-1-P). This Botryotinia fuckeliana (strain B05.10) (Noble rot fungus) protein is Methylthioribulose-1-phosphate dehydratase.